We begin with the raw amino-acid sequence, 181 residues long: Large ribosomal subunit protein uL10 (181 aa).

It belongs to the universal ribosomal protein uL10 family. Part of the ribosomal stalk of the 50S ribosomal subunit. The N-terminus interacts with L11 and the large rRNA to form the base of the stalk. The C-terminus forms an elongated spine to which L12 dimers bind in a sequential fashion forming a multimeric L10(L12)X complex.

In terms of biological role, forms part of the ribosomal stalk, playing a central role in the interaction of the ribosome with GTP-bound translation factors. This is Large ribosomal subunit protein uL10 from Chloroflexus aggregans (strain MD-66 / DSM 9485).